Here is a 789-residue protein sequence, read N- to C-terminus: Larval serum protein 1 beta chain (789 aa).

The signal sequence occupies residues 1-16 (MKIAIALLACLGLAAA).

Belongs to the hemocyanin family. In terms of assembly, heterohexamer, composed of three subunits, alpha, beta and gamma. Larval hemolymph.

It is found in the secreted. The protein localises to the extracellular space. Larval storage protein (LSP) which may serve as a store of amino acids for synthesis of adult proteins. This chain is Larval serum protein 1 beta chain (Lsp1beta), found in Drosophila melanogaster (Fruit fly).